A 213-amino-acid chain; its full sequence is MSETAPAAPAAAPPAEKTPVKKKAAKKPAGARRKASGPPVSELITKAVAASKERSGVSLAALKKALAAAGYDVEKNNSRIKLGLKSLVSKGTLVQTKGTGASGSFKLNKKAATGEAKPKAKKAGAAKPKKAAGAAKKTKKATGAATPKKTAKKTPKKAKKPAAAAVTKKVAKSPKKAKAAKPKKAAKSAAKAVKPKAAKPKVAKPKKAAPKKK.

Positions 1–17 are enriched in low complexity; that stretch reads MSETAPAAPAAAPPAEK. The tract at residues 1-41 is disordered; the sequence is MSETAPAAPAAAPPAEKTPVKKKAAKKPAGARRKASGPPVS. Ser2 is modified (N-acetylserine; partial). At Ser2 the chain carries Phosphoserine. At Lys17 the chain carries N6-acetyllysine. Positions 20–35 are enriched in basic residues; it reads VKKKAAKKPAGARRKA. Lys23, Lys26, and Lys27 each carry N6-(2-hydroxyisobutyryl)lysine. Lys34 carries the N6-(beta-hydroxybutyryl)lysine; alternate modification. Lys34 is modified (N6-crotonyllysine; alternate). Lys34 carries the post-translational modification N6-methyllysine; alternate. Residues 36–109 enclose the H15 domain; it reads SGPPVSELIT…GASGSFKLNK (74 aa). At Lys46 the chain carries N6-(2-hydroxyisobutyryl)lysine. Lys52 is subject to N6-(beta-hydroxybutyryl)lysine; alternate. An N6-(2-hydroxyisobutyryl)lysine; alternate modification is found at Lys52. At Arg54 the chain carries Citrulline. Lys63 is modified (N6-(2-hydroxyisobutyryl)lysine). Position 64 is an N6-(beta-hydroxybutyryl)lysine; alternate (Lys64). Lys64 is subject to N6-crotonyllysine; alternate. Position 64 is an N6-(2-hydroxyisobutyryl)lysine; alternate (Lys64). N6-(2-hydroxyisobutyryl)lysine is present on residues Lys75 and Lys81. N6-(beta-hydroxybutyryl)lysine; alternate occurs at positions 85 and 90. An N6-crotonyllysine; alternate mark is found at Lys85, Lys90, and Lys97. Residues Lys85, Lys90, and Lys97 each carry the N6-(2-hydroxyisobutyryl)lysine; alternate modification. The segment at 95–213 is disordered; that stretch reads QTKGTGASGS…KPKKAAPKKK (119 aa). Lys97 bears the N6-succinyllysine; alternate mark. At Ser104 the chain carries Phosphoserine; by PKC. Lys106 is subject to N6-(beta-hydroxybutyryl)lysine. N6-(2-hydroxyisobutyryl)lysine is present on residues Lys110, Lys117, Lys121, Lys129, and Lys136. Positions 119-140 are enriched in basic residues; that stretch reads KAKKAGAAKPKKAAGAAKKTKK. At Thr146 the chain carries Phosphothreonine. Lys148 carries the post-translational modification N6-(2-hydroxyisobutyryl)lysine. Residues 149-160 are compositionally biased toward basic residues; the sequence is KTAKKTPKKAKK. N6-crotonyllysine; alternate is present on residues Lys159 and Lys168. Lys159 and Lys168 each carry N6-(2-hydroxyisobutyryl)lysine; alternate. Residues 169 to 186 show a composition bias toward basic residues; sequence KVAKSPKKAKAAKPKKAA. Lys187 carries the N6-methyllysine; by EHMT1 and EHMT2 modification. Ser188 bears the ADP-ribosylserine mark. Residues 193 to 213 are compositionally biased toward basic residues; it reads VKPKAAKPKVAKPKKAAPKKK.

It belongs to the histone H1/H5 family. Post-translationally, H1 histones are progressively phosphorylated during the cell cycle, becoming maximally phosphorylated during late G2 phase and M phase, and being dephosphorylated sharply thereafter. Crotonylation (Kcr) is specifically present in male germ cells and marks testis-specific genes in post-meiotic cells, including X-linked genes that escape sex chromosome inactivation in haploid cells. Crotonylation marks active promoters and enhancers and confers resistance to transcriptional repressors. It is also associated with post-meiotically activated genes on autosomes. In terms of processing, ADP-ribosylated on Ser-188 in response to DNA damage. Post-translationally, citrullination at Arg-54 (H1R54ci) by PADI4 takes place within the DNA-binding site of H1 and results in its displacement from chromatin and global chromatin decondensation, thereby promoting pluripotency and stem cell maintenance.

It localises to the nucleus. The protein resides in the chromosome. In terms of biological role, histone H1 protein binds to linker DNA between nucleosomes forming the macromolecular structure known as the chromatin fiber. Histones H1 are necessary for the condensation of nucleosome chains into higher-order structured fibers. Also acts as a regulator of individual gene transcription through chromatin remodeling, nucleosome spacing and DNA methylation. The sequence is that of Histone H1.2 from Bos taurus (Bovine).